The sequence spans 747 residues: Ferrichrome outer membrane transporter/phage receptor (747 aa).

The first 33 residues, 1-33 (MARSKTAQPKHSLRKIAVVVATAVSGMSVYAQA), serve as a signal peptide directing secretion. The Periplasmic portion of the chain corresponds to 34 to 192 (AVEPKEDTIT…NMVSKRPTTE (159 aa)). A TonB box motif is present at residues 40-47 (DTITVTAA). Positions 75–187 (PIQKVPQSIS…PGGLLNMVSK (113 aa)) constitute a TBDR plug domain. Residues arginine 114, glutamine 133, and 148 to 149 (FY) contribute to the ferrichrome site. In terms of domain architecture, TBDR beta-barrel spans 192 to 747 (EPLKEVQFKA…QVVATATFRF (556 aa)). Residues 193–201 (PLKEVQFKA) traverse the membrane as a beta stranded segment. Topologically, residues 202-206 (GTDSL) are extracellular. Residues 207–215 (FQTGFDFSD) traverse the membrane as a beta stranded segment. Residues 216–222 (SLDDDGV) lie on the Periplasmic side of the membrane. The chain crosses the membrane as a beta stranded span at residues 223–231 (YSYRLTGLA). Topologically, residues 232-245 (RSANAQQKGSEEQR) are extracellular. The beta stranded transmembrane segment at 246–255 (YAIAPAFTWR) threads the bilayer. The Periplasmic segment spans residues 256 to 259 (PDDK). Residues 260–268 (TNFTFLSYF) traverse the membrane as a beta stranded segment. Residues 269 to 312 (QNEPETGYYGWLPKEGTVEPLPNGKRLPTDFNEGAKNNTYSRNE) lie on the Extracellular side of the membrane. A ferrichrome-binding site is contributed by 277–279 (YGW). The chain crosses the membrane as a beta stranded span at residues 313–321 (KMVGYSFDH). Over 322-326 (EFNDT) the chain is Periplasmic. Residues 327-335 (FTVRQNLRF) form a beta stranded membrane-spanning segment. The Extracellular portion of the chain corresponds to 336 to 387 (AENKTSQNSVYGYGVCSDPANAYSKQCAALAPADKGHYLARKYVVDDEKLQN). 346–348 (YGY) serves as a coordination point for ferrichrome. The cysteines at positions 351 and 362 are disulfide-linked. The chain crosses the membrane as a beta stranded span at residues 388–396 (FSVDTQLQS). Topologically, residues 397 to 404 (KFATGDID) are periplasmic. The beta stranded transmembrane segment at 405 to 413 (HTLLTGVDF) threads the bilayer. Over 414-464 (MRMRNDINAWFGYDDSVPLLNLYNPVNTDFDFNAKDPANSGPYRILNKQKQ) the chain is Extracellular. Ferrichrome is bound at residue phenylalanine 424. A beta stranded transmembrane segment spans residues 465-473 (TGVYVQDQA). Over 474–477 (QWDK) the chain is Periplasmic. The beta stranded transmembrane segment at 478–486 (VLVTLGGRY) threads the bilayer. Residues 487–508 (DWADQESLNRVAGTTDKRDDKQ) lie on the Extracellular side of the membrane. The chain crosses the membrane as a beta stranded span at residues 509 to 517 (FTWRGGVNY). The Periplasmic segment spans residues 518 to 522 (LFDNG). Residues 523 to 531 (VTPYFSYSE) traverse the membrane as a beta stranded segment. The Extracellular segment spans residues 532 to 551 (SFEPSSQVGKDGNIFAPSKG). A beta stranded membrane pass occupies residues 552-560 (KQYEVGVKY). At 561 to 565 (VPEDR) the chain is on the periplasmic side. The beta stranded transmembrane segment at 566–574 (PIVVTGAVY) threads the bilayer. The Extracellular segment spans residues 575 to 601 (NLTKTNNLMADPEGSFFSVEGGEIRAR). A beta stranded membrane pass occupies residues 602-610 (GVEIEAKAA). Topologically, residues 611–613 (LSA) are periplasmic. The chain crosses the membrane as a beta stranded span at residues 614–622 (SVNVVGSYT). The Extracellular portion of the chain corresponds to 623–645 (YTDAEYTTDTTYKGNTPAQVPKH). A beta stranded membrane pass occupies residues 646-654 (MASLWADYT). Over 655–661 (FFDGPLS) the chain is Periplasmic. The chain crosses the membrane as a beta stranded span at residues 662–670 (GLTLGTGGR). Topologically, residues 671–689 (YTGSSYGDPANSFKVGSYT) are extracellular. The chain crosses the membrane as a beta stranded span at residues 690-698 (VVDALVRYD). The Periplasmic segment spans residues 699-705 (LARVGMA). The chain crosses the membrane as a beta stranded span at residues 706–714 (GSNVALHVN). Topologically, residues 715–737 (NLFDREYVASCFNTYGCFWGAER) are extracellular. A disulfide bond links cysteine 725 and cysteine 731. The TonB C-terminal box signature appears at 730-747 (GCFWGAERQVVATATFRF). Residue alanine 735 coordinates ferrichrome. The beta stranded transmembrane segment at 738-746 (QVVATATFR) threads the bilayer. A topological domain (periplasmic) is located at residue phenylalanine 747.

It belongs to the TonB-dependent receptor family. As to quaternary structure, monomer. Interacts with TonB. Interacts with Escherichia phage T5 receptor-binding protein pb5 (RBP-pb5); this interaction is necessary for the entry of the viral genome into the host cell.

It is found in the cell outer membrane. With respect to regulation, binding of ferrichrome or colicin M enhances the interaction between FhuA and TonB. TonB activates FhuA through interaction with the beta-barrel. Involved in the uptake of iron in complex with ferrichrome, a hydroxamate-type siderophore. Binds and transports ferrichrome-iron across the outer membrane. In addition to its role in ferrichrome-iron transport, transports the antibiotic albomycin, which is a structural analog of ferrichrome, and acts as a receptor for colicin M, microcin J25 and bacteriophages T1, T5, phi80 and UC-1. The energy source, which is required for all FhuA functions except infection by phage T5, is provided by the inner membrane TonB system. The protein is Ferrichrome outer membrane transporter/phage receptor of Escherichia coli (strain K12).